Here is a 230-residue protein sequence, read N- to C-terminus: Sugar fermentation stimulation protein homolog (230 aa).

The protein belongs to the SfsA family.

In Clostridium botulinum (strain 657 / Type Ba4), this protein is Sugar fermentation stimulation protein homolog.